Consider the following 242-residue polypeptide: Small ribosomal subunit protein uS2 (242 aa).

Belongs to the universal ribosomal protein uS2 family.

The sequence is that of Small ribosomal subunit protein uS2 from Neisseria meningitidis serogroup B (strain ATCC BAA-335 / MC58).